The following is a 147-amino-acid chain: Cyanate hydratase (147 aa).

Residues arginine 88, glutamate 91, and serine 114 contribute to the active site.

Belongs to the cyanase family.

The catalysed reaction is cyanate + hydrogencarbonate + 3 H(+) = NH4(+) + 2 CO2. In terms of biological role, catalyzes the reaction of cyanate with bicarbonate to produce ammonia and carbon dioxide. This chain is Cyanate hydratase, found in Polaromonas sp. (strain JS666 / ATCC BAA-500).